The following is a 357-amino-acid chain: 3-isopropylmalate dehydrogenase (357 aa).

Substrate is bound by residues Arg97, Arg107, Arg135, and Asp224. Mg(2+) is bound by residues Asp224, Asp248, and Asp252. 282-294 (GSAPDIAGKNIAN) lines the NAD(+) pocket.

The protein belongs to the isocitrate and isopropylmalate dehydrogenases family. LeuB type 1 subfamily. In terms of assembly, homodimer. It depends on Mg(2+) as a cofactor. The cofactor is Mn(2+).

It is found in the cytoplasm. It carries out the reaction (2R,3S)-3-isopropylmalate + NAD(+) = 4-methyl-2-oxopentanoate + CO2 + NADH. The protein operates within amino-acid biosynthesis; L-leucine biosynthesis; L-leucine from 3-methyl-2-oxobutanoate: step 3/4. Its function is as follows. Catalyzes the oxidation of 3-carboxy-2-hydroxy-4-methylpentanoate (3-isopropylmalate) to 3-carboxy-4-methyl-2-oxopentanoate. The product decarboxylates to 4-methyl-2 oxopentanoate. The protein is 3-isopropylmalate dehydrogenase of Prochlorococcus marinus subsp. pastoris (strain CCMP1986 / NIES-2087 / MED4).